A 224-amino-acid chain; its full sequence is uncharacterized protein (224 aa).

The signal sequence occupies residues Met-1–Ala-23. The region spanning Asn-31–Glu-224 is the VWFA domain.

The protein to B.subtilis YwmC.

This is an uncharacterized protein from Bacillus subtilis (strain 168).